The following is a 772-amino-acid chain: Phenylalanine--tRNA ligase beta subunit (772 aa).

The 119-residue stretch at 40–158 folds into the tRNA-binding domain; it reads IKPSTNLVFA…DHYKTPNQIF (119 aa). Residues 397-468 form the B5 domain; the sequence is SVHNVIKNKI…KKISIQEIKP (72 aa). Mg(2+) contacts are provided by D446, D452, E455, and D456. In terms of domain architecture, FDX-ACB spans 691-772; sequence SMYHDVIRDI…QEVNNYLKQF (82 aa).

Belongs to the phenylalanyl-tRNA synthetase beta subunit family. Type 1 subfamily. Tetramer of two alpha and two beta subunits. Mg(2+) serves as cofactor.

Its subcellular location is the cytoplasm. The catalysed reaction is tRNA(Phe) + L-phenylalanine + ATP = L-phenylalanyl-tRNA(Phe) + AMP + diphosphate + H(+). This chain is Phenylalanine--tRNA ligase beta subunit (pheT), found in Ureaplasma parvum serovar 3 (strain ATCC 700970).